Here is a 103-residue protein sequence, read N- to C-terminus: Small ribosomal subunit protein uS10 (103 aa).

It belongs to the universal ribosomal protein uS10 family. Part of the 30S ribosomal subunit.

Involved in the binding of tRNA to the ribosomes. This is Small ribosomal subunit protein uS10 from Borreliella burgdorferi (strain ATCC 35210 / DSM 4680 / CIP 102532 / B31) (Borrelia burgdorferi).